The sequence spans 292 residues: Phosphatidylserine decarboxylase proenzyme (292 aa).

Residues D89, H146, and S252 each act as charge relay system; for autoendoproteolytic cleavage activity in the active site. S252 acts as the Schiff-base intermediate with substrate; via pyruvic acid; for decarboxylase activity in catalysis. S252 carries the pyruvic acid (Ser); by autocatalysis modification.

Belongs to the phosphatidylserine decarboxylase family. PSD-B subfamily. Prokaryotic type I sub-subfamily. In terms of assembly, heterodimer of a large membrane-associated beta subunit and a small pyruvoyl-containing alpha subunit. Pyruvate is required as a cofactor. Is synthesized initially as an inactive proenzyme. Formation of the active enzyme involves a self-maturation process in which the active site pyruvoyl group is generated from an internal serine residue via an autocatalytic post-translational modification. Two non-identical subunits are generated from the proenzyme in this reaction, and the pyruvate is formed at the N-terminus of the alpha chain, which is derived from the carboxyl end of the proenzyme. The autoendoproteolytic cleavage occurs by a canonical serine protease mechanism, in which the side chain hydroxyl group of the serine supplies its oxygen atom to form the C-terminus of the beta chain, while the remainder of the serine residue undergoes an oxidative deamination to produce ammonia and the pyruvoyl prosthetic group on the alpha chain. During this reaction, the Ser that is part of the protease active site of the proenzyme becomes the pyruvoyl prosthetic group, which constitutes an essential element of the active site of the mature decarboxylase.

It is found in the cell membrane. The catalysed reaction is a 1,2-diacyl-sn-glycero-3-phospho-L-serine + H(+) = a 1,2-diacyl-sn-glycero-3-phosphoethanolamine + CO2. Its pathway is phospholipid metabolism; phosphatidylethanolamine biosynthesis; phosphatidylethanolamine from CDP-diacylglycerol: step 2/2. In terms of biological role, catalyzes the formation of phosphatidylethanolamine (PtdEtn) from phosphatidylserine (PtdSer). This chain is Phosphatidylserine decarboxylase proenzyme, found in Shewanella sp. (strain MR-7).